The following is a 487-amino-acid chain: N-succinylglutamate 5-semialdehyde dehydrogenase (487 aa).

221–226 (GSSRTG) contributes to the NAD(+) binding site. Catalysis depends on residues Glu-244 and Cys-278.

The protein belongs to the aldehyde dehydrogenase family. AstD subfamily.

The catalysed reaction is N-succinyl-L-glutamate 5-semialdehyde + NAD(+) + H2O = N-succinyl-L-glutamate + NADH + 2 H(+). Its pathway is amino-acid degradation; L-arginine degradation via AST pathway; L-glutamate and succinate from L-arginine: step 4/5. Catalyzes the NAD-dependent reduction of succinylglutamate semialdehyde into succinylglutamate. The polypeptide is N-succinylglutamate 5-semialdehyde dehydrogenase (Pseudomonas putida (strain ATCC 700007 / DSM 6899 / JCM 31910 / BCRC 17059 / LMG 24140 / F1)).